The sequence spans 87 residues: MGGISIWQLLIIALIIVLLFGTKKLRSLGGDLGSAVKGFKKAIGDEELTVKKDNTEADADFEQKTLSKEEQQSEDPVQKSQKDKEQV.

Residues 1-21 (MGGISIWQLLIIALIIVLLFG) traverse the membrane as a helical segment. The interval 54–87 (NTEADADFEQKTLSKEEQQSEDPVQKSQKDKEQV) is disordered.

This sequence belongs to the TatA/E family. In terms of assembly, the Tat system comprises two distinct complexes: a TatABC complex, containing multiple copies of TatA, TatB and TatC subunits, and a separate TatA complex, containing only TatA subunits. Substrates initially bind to the TatABC complex, which probably triggers association of the separate TatA complex to form the active translocon.

The protein localises to the cell inner membrane. Functionally, part of the twin-arginine translocation (Tat) system that transports large folded proteins containing a characteristic twin-arginine motif in their signal peptide across membranes. TatA could form the protein-conducting channel of the Tat system. This Photobacterium profundum (strain SS9) protein is Sec-independent protein translocase protein TatA.